A 50-amino-acid polypeptide reads, in one-letter code: Large ribosomal subunit protein bL33B (50 aa).

Belongs to the bacterial ribosomal protein bL33 family.

The polypeptide is Large ribosomal subunit protein bL33B (Streptococcus agalactiae serotype V (strain ATCC BAA-611 / 2603 V/R)).